Consider the following 192-residue polypeptide: Adenylate kinase (192 aa).

10-15 (GAGKGT) is a binding site for ATP. The NMP stretch occupies residues 30-59 (STGDMLREVIRRETEIGKKAKAMINAGTLV). AMP-binding positions include threonine 31, arginine 36, 57–59 (TLV), 85–88 (GYPR), and glutamine 92. An LID region spans residues 126–142 (KRVQETIIAGGQVRSDD). Arginine 127 serves as a coordination point for ATP. Positions 139 and 150 each coordinate AMP. Isoleucine 178 provides a ligand contact to ATP.

This sequence belongs to the adenylate kinase family. In terms of assembly, monomer.

The protein localises to the cytoplasm. The catalysed reaction is AMP + ATP = 2 ADP. Its pathway is purine metabolism; AMP biosynthesis via salvage pathway; AMP from ADP: step 1/1. In terms of biological role, catalyzes the reversible transfer of the terminal phosphate group between ATP and AMP. Plays an important role in cellular energy homeostasis and in adenine nucleotide metabolism. The sequence is that of Adenylate kinase from Bartonella henselae (strain ATCC 49882 / DSM 28221 / CCUG 30454 / Houston 1) (Rochalimaea henselae).